The sequence spans 816 residues: Fibroblast growth factor receptor 1 (816 aa).

Residues methionine 1–proline 23 form the signal peptide. The Extracellular segment spans residues alanine 24–glutamate 374. In terms of domain architecture, Ig-like C2-type 1 spans proline 25–serine 118. Cysteines 54 and 100 form a disulfide. N-linked (GlcNAc...) asparagine glycans are attached at residues asparagine 76 and asparagine 116. The interval serine 118–phenylalanine 152 is disordered. The span at lysine 133 to asparagine 143 shows a compositional bias: basic and acidic residues. 2 consecutive Ig-like C2-type domains span residues proline 156 to aspartate 244 and proline 253 to threonine 355. Cysteine 176 and cysteine 228 are oxidised to a cystine. Asparagine 238, asparagine 262, asparagine 294, asparagine 315, and asparagine 328 each carry an N-linked (GlcNAc...) asparagine glycan. Residues cysteine 275 and cysteine 339 are joined by a disulfide bond. The helical transmembrane segment at isoleucine 375–tyrosine 395 threads the bilayer. Residues lysine 396–arginine 816 lie on the Cytoplasmic side of the membrane. Tyrosine 459 is modified (phosphotyrosine; by autocatalysis). The region spanning leucine 474–leucine 763 is the Protein kinase domain. Residues leucine 480–glycine 486, lysine 510, glutamate 558–alanine 560, and asparagine 564 each bind ATP. A phosphotyrosine; by autocatalysis mark is found at tyrosine 579 and tyrosine 581. The active-site Proton acceptor is aspartate 619. Arginine 623 and aspartate 637 together coordinate ATP. A phosphotyrosine; by autocatalysis mark is found at tyrosine 649, tyrosine 650, tyrosine 726, and tyrosine 762. Residues phenylalanine 776–arginine 816 are disordered. The segment covering threonine 779 to glutamate 788 has biased composition (polar residues).

This sequence belongs to the protein kinase superfamily. Tyr protein kinase family. Fibroblast growth factor receptor subfamily. As to quaternary structure, monomer. Homodimer after ligand binding. Post-translationally, autophosphorylated. Binding of FGF family members together with heparan sulfate proteoglycan or heparin promotes receptor dimerization and autophosphorylation on tyrosine residues. Autophosphorylation occurs in trans between the two FGFR molecules present in the dimer and proceeds in a highly ordered manner. Phosphotyrosine residues provide docking sites for interacting proteins and so are crucial for FGFR1 function and its regulation. In terms of processing, ubiquitinated. FGFR1 is rapidly ubiquitinated after autophosphorylation, leading to internalization and degradation. N-glycosylated in the endoplasmic reticulum. The N-glycan chains undergo further maturation to an Endo H-resistant form in the Golgi apparatus.

The protein localises to the cell membrane. The protein resides in the nucleus. Its subcellular location is the cytoplasm. It localises to the cytosol. It is found in the cytoplasmic vesicle. It catalyses the reaction L-tyrosyl-[protein] + ATP = O-phospho-L-tyrosyl-[protein] + ADP + H(+). Present in an inactive conformation in the absence of bound ligand. Ligand binding leads to dimerization and activation by sequential autophosphorylation on tyrosine residues. Its function is as follows. Tyrosine-protein kinase that acts as a cell-surface receptor for fibroblast growth factors and plays an essential role in the regulation of embryonic development, cell proliferation, differentiation and migration. Required for normal mesoderm patterning and normal skeletogenesis. Phosphorylates PLCG1, FRS2, GAB1 and SHB. Ligand binding leads to the activation of several signaling cascades. Activation of PLCG1 leads to the production of the cellular signaling molecules diacylglycerol and inositol-1,4,5-trisphosphate. Phosphorylation of FRS2 triggers recruitment of GRB2, GAB1, PIK3R1 and SOS1, and mediates activation of RAS, MAPK1/ERK2, MAPK3/ERK1 and the MAP kinase signaling pathway, as well as of the AKT1 signaling pathway. Promotes phosphorylation of SHC1, STAT1 and PTPN11/SHP2. In the nucleus, enhances RPS6KA1 and CREB1 activity and contributes to the regulation of transcription. FGFR1 signaling is down-regulated by ubiquitination, internalization and degradation. In Pleurodeles waltl (Iberian ribbed newt), this protein is Fibroblast growth factor receptor 1 (FGFR1).